The sequence spans 912 residues: Cadherin-2 (912 aa).

The signal sequence occupies residues 1 to 28; it reads MCRIAGTPPRILPPLALMLLAALQQAPI. Positions 29–164 are excised as a propeptide; that stretch reads KATCEDMLCK…DSSHLKRQKR (136 aa). Cadherin domains lie at 165–272, 273–387, 388–502, 503–609, and 610–720; these read DWVI…RPEF, LHQV…PPEF, TAMT…SPYF, VPNP…DNAP, and QVNP…DVDR. Residues 165 to 729 are Extracellular-facing; the sequence is DWVIPPINLP…RIVGAGLGTG (565 aa). Positions 175, 231, 233, 264, 265, 266, 267, and 268 each coordinate Ca(2+). A glycan (N-linked (GlcNAc...) asparagine) is linked at asparagine 278. The Ca(2+) site is built by aspartate 298, aspartate 300, and asparagine 306. Asparagine 330 carries N-linked (GlcNAc...) asparagine glycosylation. Aspartate 358 provides a ligand contact to Ca(2+). 4 N-linked (GlcNAc...) asparagine glycosylation sites follow: asparagine 407, asparagine 578, asparagine 628, and asparagine 657. Residues 730–752 traverse the membrane as a helical segment; sequence AIIAILLCIIILLILVLMFVVWM. Residues 753-912 are Cytoplasmic-facing; it reads KRRDKERQAK…LADMYGGGDD (160 aa). The span at 869–886 shows a compositional bias: low complexity; sequence SGSTAGSLSSLNSSSSGG. The tract at residues 869–890 is disordered; sequence SGSTAGSLSSLNSSSSGGEQDY.

Homodimer (via extracellular region). Can also form heterodimers with other cadherins (via extracellular region). Dimerization occurs in trans, i.e. with a cadherin chain from another cell. Interacts with CTNNA2. Expressed at intercalated disks in the heart (at protein level).

It localises to the cell membrane. The protein resides in the sarcolemma. The protein localises to the cell junction. It is found in the cell surface. Its subcellular location is the desmosome. It localises to the adherens junction. Calcium-dependent cell adhesion protein; preferentially mediates homotypic cell-cell adhesion. Cadherins may thus contribute to the sorting of heterogeneous cell types, and thereby play an important role during embryonic development. Required for proper neurite branching, and pre- and postsynaptic organization. The sequence is that of Cadherin-2 (CDH2) from Gallus gallus (Chicken).